Consider the following 165-residue polypeptide: Ubiquitin-like protein 4B (165 aa).

The region spanning 1-76 (MFLTVKLLLG…ISVVVRPLEK (76 aa)) is the Ubiquitin-like domain. The disordered stretch occupies residues 139–165 (EPLAQPTGEREPEVLSPNKEEEKEAVQ). Positions 146 to 165 (GEREPEVLSPNKEEEKEAVQ) are enriched in basic and acidic residues.

The protein resides in the cytoplasm. This chain is Ubiquitin-like protein 4B (UBL4B), found in Bos taurus (Bovine).